Reading from the N-terminus, the 203-residue chain is Recombination protein RecR (203 aa).

Residues 56-71 (CAVCGNVSDEERCRIC) form a C4-type zinc finger. Residues 79-179 (SLICVVEEPK…TVTRIASGLP (101 aa)) form the Toprim domain.

This sequence belongs to the RecR family.

Functionally, may play a role in DNA repair. It seems to be involved in an RecBC-independent recombinational process of DNA repair. It may act with RecF and RecO. This chain is Recombination protein RecR, found in Mycolicibacterium vanbaalenii (strain DSM 7251 / JCM 13017 / BCRC 16820 / KCTC 9966 / NRRL B-24157 / PYR-1) (Mycobacterium vanbaalenii).